Reading from the N-terminus, the 194-residue chain is Cysteine and glycine-rich protein 2 (194 aa).

One can recognise an LIM zinc-binding 1 domain in the interval 10-61; that stretch reads CGACGRTVYHAEEVQCDGRSFHRCCFLCMVCRKNLDSTTVAIHDAEVYCKSC. The Nuclear localization signal motif lies at 64–69; that stretch reads KKYGPK. Residues 85–110 are disordered; sequence GERLGIKPESSPSPHRPTTNPNTSKF. Residues 94 to 110 are compositionally biased toward polar residues; the sequence is SSPSPHRPTTNPNTSKF. Residues 120–171 form the LIM zinc-binding 2 domain; that stretch reads CSRCGDSVYAAEKVIGAGKPWHKNCFRCAKCGKSLESTTLTEKEGEIYCKGC.

The protein localises to the nucleus. Its function is as follows. Interacts with zyxin. May be a component of a signal transduction pathway that mediates adhesion-stimulated changes in gene expression. Totally down-regulated in transformed cells. The polypeptide is Cysteine and glycine-rich protein 2 (CSRP2) (Coturnix japonica (Japanese quail)).